Consider the following 915-residue polypeptide: Probable dipeptidyl-aminopeptidase B (915 aa).

Residues 1-82 form a disordered region; that stretch reads MAPPFTDDPE…GAFLGPPGVP (82 aa). Topologically, residues 1 to 94 are cytoplasmic; the sequence is MAPPFTDDPE…RQPMDRGFRR (94 aa). The span at 15 to 32 shows a compositional bias: low complexity; that stretch reads STSRLSQDSLSSVSTTSL. Residues 36 to 62 are compositionally biased toward basic and acidic residues; sequence RIQEEMDRDPSASRSARRDLLPATKDE. Residues 95–115 form a helical; Signal-anchor for type II membrane protein membrane-spanning segment; the sequence is ILIIIGAVFVGAWLAGLGIFV. The Vacuolar segment spans residues 116–915; the sequence is LSGSYKHESD…IDTKKRRHVS (800 aa). 2 N-linked (GlcNAc...) asparagine glycosylation sites follow: N355 and N577. The active-site Charge relay system is the S760. N819 carries N-linked (GlcNAc...) asparagine glycosylation. Catalysis depends on charge relay system residues D837 and H870.

It belongs to the peptidase S9B family.

The protein localises to the vacuole membrane. The enzyme catalyses Release of an N-terminal dipeptide, Xaa-Yaa-|-Zaa-, from a polypeptide, preferentially when Yaa is Pro, provided Zaa is neither Pro nor hydroxyproline.. In terms of biological role, type IV dipeptidyl-peptidase which removes N-terminal dipeptides sequentially from polypeptides having unsubstituted N-termini provided that the penultimate residue is proline. This is Probable dipeptidyl-aminopeptidase B (DAPB) from Metarhizium robertsii (strain ARSEF 23 / ATCC MYA-3075) (Metarhizium anisopliae (strain ARSEF 23)).